A 197-amino-acid polypeptide reads, in one-letter code: Large ribosomal subunit protein uL10 (197 aa).

The disordered stretch occupies residues 162–197 (READGETAETPAQETASDDSKSTKAEASDASTTENK). Positions 179–188 (DDSKSTKAEA) are enriched in basic and acidic residues.

The protein belongs to the universal ribosomal protein uL10 family. Part of the ribosomal stalk of the 50S ribosomal subunit. The N-terminus interacts with L11 and the large rRNA to form the base of the stalk. The C-terminus forms an elongated spine to which L12 dimers bind in a sequential fashion forming a multimeric L10(L12)X complex.

Functionally, forms part of the ribosomal stalk, playing a central role in the interaction of the ribosome with GTP-bound translation factors. The polypeptide is Large ribosomal subunit protein uL10 (Oenococcus oeni (strain ATCC BAA-331 / PSU-1)).